A 485-amino-acid polypeptide reads, in one-letter code: ATP synthase subunit beta 1 (485 aa).

An ATP-binding site is contributed by 157-164 (GGAGVGKT).

This sequence belongs to the ATPase alpha/beta chains family. F-type ATPases have 2 components, CF(1) - the catalytic core - and CF(0) - the membrane proton channel. CF(1) has five subunits: alpha(3), beta(3), gamma(1), delta(1), epsilon(1). CF(0) has three main subunits: a(1), b(2) and c(9-12). The alpha and beta chains form an alternating ring which encloses part of the gamma chain. CF(1) is attached to CF(0) by a central stalk formed by the gamma and epsilon chains, while a peripheral stalk is formed by the delta and b chains.

Its subcellular location is the cell inner membrane. The enzyme catalyses ATP + H2O + 4 H(+)(in) = ADP + phosphate + 5 H(+)(out). In terms of biological role, produces ATP from ADP in the presence of a proton gradient across the membrane. The catalytic sites are hosted primarily by the beta subunits. The chain is ATP synthase subunit beta 1 from Psychromonas ingrahamii (strain DSM 17664 / CCUG 51855 / 37).